The chain runs to 309 residues: Porphobilinogen deaminase (309 aa).

At C241 the chain carries S-(dipyrrolylmethanemethyl)cysteine.

The protein belongs to the HMBS family. As to quaternary structure, monomer. The cofactor is dipyrromethane.

The catalysed reaction is 4 porphobilinogen + H2O = hydroxymethylbilane + 4 NH4(+). The protein operates within porphyrin-containing compound metabolism; protoporphyrin-IX biosynthesis; coproporphyrinogen-III from 5-aminolevulinate: step 2/4. Its function is as follows. Tetrapolymerization of the monopyrrole PBG into the hydroxymethylbilane pre-uroporphyrinogen in several discrete steps. In Geobacillus kaustophilus (strain HTA426), this protein is Porphobilinogen deaminase.